We begin with the raw amino-acid sequence, 62 residues long: Large ribosomal subunit protein uL29 (62 aa).

The protein belongs to the universal ribosomal protein uL29 family.

The chain is Large ribosomal subunit protein uL29 from Trichlorobacter lovleyi (strain ATCC BAA-1151 / DSM 17278 / SZ) (Geobacter lovleyi).